A 427-amino-acid polypeptide reads, in one-letter code: Cyclin-L1-1 (427 aa).

The disordered stretch occupies residues 258–427 (HRRTSDTNAS…SRDKDRHRRQ (170 aa)). Positions 263–276 (DTNASKESPATTVA) are enriched in polar residues. 4 stretches are compositionally biased toward basic and acidic residues: residues 289-311 (QEKD…DDGK), 328-382 (KSEK…DRDR), 390-400 (DRSSGYSDKEK), and 407-421 (RDRG…SRDK).

It belongs to the cyclin family. Cyclin L subfamily.

In Oryza sativa subsp. japonica (Rice), this protein is Cyclin-L1-1 (CYCL1-1).